The following is a 418-amino-acid chain: D-amino acid dehydrogenase (418 aa).

FAD is bound at residue 3-17 (VTILGAGVVGVTSAW).

The protein belongs to the DadA oxidoreductase family. Requires FAD as cofactor.

It catalyses the reaction a D-alpha-amino acid + A + H2O = a 2-oxocarboxylate + AH2 + NH4(+). Its pathway is amino-acid degradation; D-alanine degradation; NH(3) and pyruvate from D-alanine: step 1/1. In terms of biological role, oxidative deamination of D-amino acids. The protein is D-amino acid dehydrogenase of Agrobacterium fabrum (strain C58 / ATCC 33970) (Agrobacterium tumefaciens (strain C58)).